The primary structure comprises 2551 residues: Probable polyketide synthase 13 (2551 aa).

Residues E10 to Q434 enclose the Ketosynthase family 3 (KS3) domain. Residues C176, H317, and H358 each act as for beta-ketoacyl synthase activity in the active site. Positions G621 to Y654 are acyl/malonyl transferase. The active-site For acyl/malonyl transferase activity is S631. Residues T928 to S1057 form an N-terminal hotdog fold region. Positions T928–S1226 constitute a PKS/mFAS DH domain. Catalysis depends on H961, which acts as the Proton acceptor; for dehydratase activity. Positions N1076 to S1226 are C-terminal hotdog fold. D1136 functions as the Proton donor; for dehydratase activity in the catalytic mechanism. In terms of domain architecture, Carrier spans D2465 to F2542. O-(pantetheine 4'-phosphoryl)serine is present on S2502.

It depends on pantetheine 4'-phosphate as a cofactor.

Its function is as follows. Probable polyketide synthase. The sequence is that of Probable polyketide synthase 13 (pks13) from Dictyostelium discoideum (Social amoeba).